The primary structure comprises 1064 residues: Leucine--tRNA ligase (1064 aa).

Positions 1–25 (MARAMSETAEPGARTGAADTTVAPT) are disordered. Positions 106 to 117 (PYPSGSGLHVGH) match the 'HIGH' region motif. The tract at residues 435 to 456 (GRPGGGTEPADTAGPEAGADPA) is disordered. Residues 831–835 (KMGKS) carry the 'KMSKS' region motif. ATP is bound at residue lysine 834.

This sequence belongs to the class-I aminoacyl-tRNA synthetase family.

The protein localises to the cytoplasm. The catalysed reaction is tRNA(Leu) + L-leucine + ATP = L-leucyl-tRNA(Leu) + AMP + diphosphate. The protein is Leucine--tRNA ligase of Frankia casuarinae (strain DSM 45818 / CECT 9043 / HFP020203 / CcI3).